The sequence spans 673 residues: DNA mismatch repair protein MutL (673 aa).

It belongs to the DNA mismatch repair MutL/HexB family.

This protein is involved in the repair of mismatches in DNA. It is required for dam-dependent methyl-directed DNA mismatch repair. May act as a 'molecular matchmaker', a protein that promotes the formation of a stable complex between two or more DNA-binding proteins in an ATP-dependent manner without itself being part of a final effector complex. This Ehrlichia chaffeensis (strain ATCC CRL-10679 / Arkansas) protein is DNA mismatch repair protein MutL.